A 494-amino-acid polypeptide reads, in one-letter code: 3-octaprenyl-4-hydroxybenzoate carboxy-lyase (494 aa).

Asparagine 172 serves as a coordination point for Mn(2+). Residues 175–177 (IYR), 189–191 (RWL), and 194–195 (RG) each bind prenylated FMN. Glutamate 238 serves as a coordination point for Mn(2+). Aspartate 287 serves as the catalytic Proton donor.

Belongs to the UbiD family. As to quaternary structure, homohexamer. The cofactor is prenylated FMN. Mn(2+) serves as cofactor.

It is found in the cell membrane. The catalysed reaction is a 4-hydroxy-3-(all-trans-polyprenyl)benzoate + H(+) = a 2-(all-trans-polyprenyl)phenol + CO2. The protein operates within cofactor biosynthesis; ubiquinone biosynthesis. In terms of biological role, catalyzes the decarboxylation of 3-octaprenyl-4-hydroxy benzoate to 2-octaprenylphenol, an intermediate step in ubiquinone biosynthesis. This Escherichia coli O139:H28 (strain E24377A / ETEC) protein is 3-octaprenyl-4-hydroxybenzoate carboxy-lyase.